We begin with the raw amino-acid sequence, 349 residues long: UDP-glucose 4-epimerase (349 aa).

NAD(+) contacts are provided by residues 10–12 (GFI), 31–35 (DNFAN), 66–67 (DV), and K92. 132–134 (SAT) contacts substrate. Catalysis depends on Y158, which acts as the Proton acceptor. NAD(+)-binding residues include K162 and Y186. Substrate-binding positions include 186–188 (YFN), 207–209 (NNL), 225–227 (TIY), R240, and 303–306 (RPGD).

It belongs to the NAD(P)-dependent epimerase/dehydratase family. NAD(+) is required as a cofactor. Expressed in gonads, vulva, intestine, hypdermis and nervous system.

The enzyme catalyses UDP-alpha-D-glucose = UDP-alpha-D-galactose. It catalyses the reaction UDP-N-acetyl-alpha-D-glucosamine = UDP-N-acetyl-alpha-D-galactosamine. Its pathway is carbohydrate metabolism; galactose metabolism. Functionally, catalyzes two distinct but analogous reactions: the reversible epimerization of UDP-glucose to UDP-galactose and the reversible epimerization of UDP-N-acetylglucosamine to UDP-N-acetylgalactosamine. The reaction with UDP-Gal plays a critical role in the Leloir pathway of galactose catabolism in which galactose is converted to the glycolytic intermediate glucose 6-phosphate. It contributes to the catabolism of dietary galactose and enables the endogenous biosynthesis of both UDP-Gal and UDP-GalNAc when exogenous sources are limited. Both UDP-sugar interconversions are important for the synthesis of glycoproteins and glycolipids. This chain is UDP-glucose 4-epimerase, found in Caenorhabditis elegans.